A 378-amino-acid chain; its full sequence is Erythronate-4-phosphate dehydrogenase (378 aa).

Substrate is bound by residues Ser-45 and Thr-66. The NAD(+) site is built by Asp-146 and Thr-175. The active site involves Arg-208. Asp-232 contacts NAD(+). Residue Glu-237 is part of the active site. Catalysis depends on His-254, which acts as the Proton donor. Gly-257 contributes to the NAD(+) binding site. Residue Tyr-258 participates in substrate binding.

This sequence belongs to the D-isomer specific 2-hydroxyacid dehydrogenase family. PdxB subfamily. As to quaternary structure, homodimer.

The protein localises to the cytoplasm. It catalyses the reaction 4-phospho-D-erythronate + NAD(+) = (R)-3-hydroxy-2-oxo-4-phosphooxybutanoate + NADH + H(+). Its pathway is cofactor biosynthesis; pyridoxine 5'-phosphate biosynthesis; pyridoxine 5'-phosphate from D-erythrose 4-phosphate: step 2/5. Catalyzes the oxidation of erythronate-4-phosphate to 3-hydroxy-2-oxo-4-phosphonooxybutanoate. The polypeptide is Erythronate-4-phosphate dehydrogenase (Shigella flexneri serotype 5b (strain 8401)).